Reading from the N-terminus, the 174-residue chain is Small ribosomal subunit protein uS12m (174 aa).

It belongs to the universal ribosomal protein uS12 family. Component of the mitochondrial small ribosomal subunit (mt-SSU). Mature N.crassa 74S mitochondrial ribosomes consist of a small (37S) and a large (54S) subunit. The 37S small subunit contains a 16S ribosomal RNA (16S mt-rRNA) and 32 different proteins. The 54S large subunit contains a 23S rRNA (23S mt-rRNA) and 42 different proteins. uS12m forms part of the decoding center of the mt-SSU.

Its subcellular location is the mitochondrion. In terms of biological role, component of the mitochondrial ribosome (mitoribosome), a dedicated translation machinery responsible for the synthesis of mitochondrial genome-encoded proteins, including at least some of the essential transmembrane subunits of the mitochondrial respiratory chain. The mitoribosomes are attached to the mitochondrial inner membrane and translation products are cotranslationally integrated into the membrane. This is Small ribosomal subunit protein uS12m (mrps12) from Neurospora crassa (strain ATCC 24698 / 74-OR23-1A / CBS 708.71 / DSM 1257 / FGSC 987).